The chain runs to 401 residues: tRNA N6-adenosine threonylcarbamoyltransferase (401 aa).

His111 and His115 together coordinate Fe cation. Residues 191–195 (LASGG), Asp223, Gly236, and Asn336 contribute to the substrate site. Asp364 contacts Fe cation.

The protein belongs to the KAE1 / TsaD family. The cofactor is Fe(2+).

It is found in the cytoplasm. It carries out the reaction L-threonylcarbamoyladenylate + adenosine(37) in tRNA = N(6)-L-threonylcarbamoyladenosine(37) in tRNA + AMP + H(+). In terms of biological role, required for the formation of a threonylcarbamoyl group on adenosine at position 37 (t(6)A37) in tRNAs that read codons beginning with adenine. Is involved in the transfer of the threonylcarbamoyl moiety of threonylcarbamoyl-AMP (TC-AMP) to the N6 group of A37, together with TsaE and TsaB. TsaD likely plays a direct catalytic role in this reaction. The protein is tRNA N6-adenosine threonylcarbamoyltransferase of Tropheryma whipplei (strain TW08/27) (Whipple's bacillus).